A 296-amino-acid polypeptide reads, in one-letter code: Nucleotide-binding protein SPCG_1551 (296 aa).

13–20 (GMSGAGKT) serves as a coordination point for ATP. A GTP-binding site is contributed by 63 to 66 (DMRS).

It belongs to the RapZ-like family.

Displays ATPase and GTPase activities. This is Nucleotide-binding protein SPCG_1551 from Streptococcus pneumoniae (strain CGSP14).